A 1161-amino-acid chain; its full sequence is Voltage-gated inwardly rectifying potassium channel KCNH2 (1161 aa).

Residues 1–405 lie on the Cytoplasmic side of the membrane; it reads MPVRRGHVAP…RIHRWTILHY (405 aa). The region spanning 17-88 is the PAS domain; that stretch reads TIIRKFEGQS…AAQIAQALLG (72 aa). In terms of domain architecture, PAC spans 92–144; the sequence is RKVEIAFYRKDGSCFLCLVDVVPVKNEDGAVIMFILNFEVVMEKDMVGSPARD. Residues 233 to 286 are disordered; it reads ALVGSCSPPPPVSAPGPHPSLRAHSLNPDASGSSCSLARTRSRESCASVRRASS. Residues Ser239 and Ser245 each carry the phosphoserine modification. Residues 239–250 are compositionally biased toward pro residues; that stretch reads SPPPPVSAPGPH. The segment covering 260–271 has biased composition (polar residues); sequence PDASGSSCSLAR. 4 positions are modified to phosphoserine: Ser285, Ser286, Ser322, and Ser353. The helical transmembrane segment at 406 to 426 threads the bilayer; the sequence is SPFKAVWDWLILLLVIYTAVF. Over 427-452 the chain is Extracellular; sequence TPYSAAFLLKETEEGPPAPECGYACQ. The chain crosses the membrane as a helical span at residues 453-473; sequence PLAVVDLIVDIMFIVDILINF. The Cytoplasmic portion of the chain corresponds to 474 to 497; it reads RTTYVNANEEVVSHPGRIAVHYFK. A helical membrane pass occupies residues 498–518; the sequence is GWFLIDMVAAIPFDLLIFGSG. At 519 to 522 the chain is on the extracellular side; it reads SEEL. Residues 523–543 traverse the membrane as a helical; Voltage-sensor segment; it reads IGLLKTARLLRLVRVARKLDR. Over 544–549 the chain is Cytoplasmic; it reads YSEYGA. The helical transmembrane segment at 550–570 threads the bilayer; that stretch reads AVLLLLMCTFALIAHWLACIW. The Extracellular segment spans residues 571–613; the sequence is YAIGNMEQPHMDSRIGWLHNLGDQMGKPYNSSGLGGPSIKDKY. N-linked (GlcNAc...) asparagine glycosylation occurs at Asn600. The segment at residues 614-634 is an intramembrane region (pore-forming); sequence VTGLYFTFSSLTSVGFGNVSP. The short motif at 626 to 631 is the Selectivity filter element; it reads SVGFGN. Residues 635-640 lie on the Extracellular side of the membrane; sequence NTNSEK. A helical transmembrane segment spans residues 641–661; sequence IFSICVMLIGSLMYASIFGNV. The Cytoplasmic portion of the chain corresponds to 662–1161; the sequence is SAIIQRLYSG…LHRHGSDPGS (500 aa). Positions 744–844 are cNMP-binding domain; sequence PFRGATKDCL…IHRDDLLEVL (101 aa). Residues 872-985 form a disordered region; it reads GSPGSTEWEG…TEDCEKSSDT (114 aa). Residues Ser873 and Ser876 each carry the phosphoserine modification. The span at 885-894 shows a compositional bias: basic residues; that stretch reads RQRKRKLSFR. The segment covering 930–941 has biased composition (low complexity); it reads GESPSSGPSSPE. The span at 962–972 shows a compositional bias: pro residues; that stretch reads SPRPPGEPPGG. Omega-N-methylarginine is present on Arg1016. The stretch at 1037–1064 forms a coiled coil; it reads RGDVESRLDALQRQLNRLETRLSADMAT. Residues 1121–1161 form a disordered region; the sequence is ELPPGAPELPQEGPTRRLSLPGQLGALTSQPLHRHGSDPGS. The residue at position 1139 (Ser1139) is a Phosphoserine.

It belongs to the potassium channel family. H (Eag) (TC 1.A.1.20) subfamily. Kv11.1/KCNH2 sub-subfamily. As to quaternary structure, the potassium channel is probably composed of a homo- or heterotetrameric complex of pore-forming alpha subunits that can associate with modulating beta subunits. Interacts with DNAJB12 and DNAJB14; chaperones DNAJB12 and DNAJB14 promote tetramerization. Heteromultimer with KCNH6/ERG2 and KCNH7/ERG3. Interacts with ALG10B. Forms a stable complex with KCNE1 or KCNE2, and that this heteromultimerization regulates Inward rectifier potassium channel activity. Interacts with CANX. The core-glycosylated, but not the fully glycosylated form interacts with RNF207. Interacts with NDFIP1 and NDFIP2; this interaction decreases the cell membrane expression by targeting KCNH2, through interaction with NEDD4L, for the degradation through the multivesicular bodies (MVBs)-lysosomal pathway. Phosphorylated on serine and threonine residues. Phosphorylation by PKA inhibits ion conduction. In terms of tissue distribution, detected in heart, both in atrium and in left ventricle.

The protein resides in the cell membrane. The catalysed reaction is K(+)(in) = K(+)(out). Functionally, pore-forming (alpha) subunit of voltage-gated inwardly rectifying potassium channel. Characterized by unusual gating kinetics by producing relatively small outward currents during membrane depolarization and large inward currents during subsequent repolarization which reflect a rapid inactivation during depolarization and quick recovery from inactivation but slow deactivation (closing) during repolarization. Channel properties are modulated by cAMP and subunit assembly. Forms a stable complex with KCNE1 or KCNE2, and that this heteromultimerization regulates inward rectifier potassium channel activity. This Oryctolagus cuniculus (Rabbit) protein is Voltage-gated inwardly rectifying potassium channel KCNH2.